The following is an 88-amino-acid chain: Small ribosomal subunit protein bS16 (88 aa).

The protein belongs to the bacterial ribosomal protein bS16 family.

The chain is Small ribosomal subunit protein bS16 from Syntrophomonas wolfei subsp. wolfei (strain DSM 2245B / Goettingen).